A 1377-amino-acid chain; its full sequence is Dicer-like protein 2 (1377 aa).

The region spanning 23–203 (MFEASLKENI…MKTLESNLDS (181 aa)) is the Helicase ATP-binding domain. 36–43 (MDTGTGKT) serves as a coordination point for ATP. The DEAH box motif lies at 144–147 (DEAH). One can recognise a Helicase C-terminal domain in the interval 368–531 (ALINFLDKFD…AYQDEERRLR (164 aa)). The Dicer dsRNA-binding fold domain maps to 561-655 (VVTHLYHFCA…LPLTKNPEMR (95 aa)). RNase III domains are found at residues 914 to 1052 (RLCA…LDGG) and 1092 to 1275 (DGDL…VDSG). 3 residues coordinate Mg(2+): glutamate 1131, aspartate 1261, and glutamate 1264.

Belongs to the helicase family. Dicer subfamily. It depends on Mg(2+) as a cofactor. The cofactor is Mn(2+).

Functionally, dicer-like endonuclease involved in cleaving double-stranded RNA in the RNA interference (RNAi) pathway. Produces 21 to 25 bp dsRNAs (siRNAs) which target the selective destruction of homologous RNAs leading to sequence-specific suppression of gene expression, called post-transcriptional gene silencing (PTGS). Part of a broad host defense response against viral infection and transposons. This Aspergillus oryzae (strain ATCC 42149 / RIB 40) (Yellow koji mold) protein is Dicer-like protein 2 (dcl2).